A 350-amino-acid chain; its full sequence is Small ribosomal subunit biogenesis GTPase RsgA (350 aa).

Positions 1 to 17 (MSKNKLSKGQQRRVNAN) are enriched in polar residues. Residues 1–33 (MSKNKLSKGQQRRVNANHQRRLKTSKEKPDYDD) are disordered. One can recognise a CP-type G domain in the interval 104–273 (TSVLTRPDFY…VIDSPGVREF (170 aa)). Residues 160 to 163 (NKID) and 214 to 222 (GQSGVGKSS) contribute to the GTP site. Positions 297, 302, 304, and 310 each coordinate Zn(2+).

This sequence belongs to the TRAFAC class YlqF/YawG GTPase family. RsgA subfamily. In terms of assembly, monomer. Associates with 30S ribosomal subunit, binds 16S rRNA. It depends on Zn(2+) as a cofactor.

It is found in the cytoplasm. In terms of biological role, one of several proteins that assist in the late maturation steps of the functional core of the 30S ribosomal subunit. Helps release RbfA from mature subunits. May play a role in the assembly of ribosomal proteins into the subunit. Circularly permuted GTPase that catalyzes slow GTP hydrolysis, GTPase activity is stimulated by the 30S ribosomal subunit. In Escherichia fergusonii (strain ATCC 35469 / DSM 13698 / CCUG 18766 / IAM 14443 / JCM 21226 / LMG 7866 / NBRC 102419 / NCTC 12128 / CDC 0568-73), this protein is Small ribosomal subunit biogenesis GTPase RsgA.